We begin with the raw amino-acid sequence, 363 residues long: tRNA/tmRNA (uracil-C(5))-methyltransferase (363 aa).

5 residues coordinate S-adenosyl-L-methionine: Q187, Y215, N220, E236, and D296. C321 functions as the Nucleophile in the catalytic mechanism. The Proton acceptor role is filled by E355.

This sequence belongs to the class I-like SAM-binding methyltransferase superfamily. RNA M5U methyltransferase family. TrmA subfamily.

It carries out the reaction uridine(54) in tRNA + S-adenosyl-L-methionine = 5-methyluridine(54) in tRNA + S-adenosyl-L-homocysteine + H(+). It catalyses the reaction uridine(341) in tmRNA + S-adenosyl-L-methionine = 5-methyluridine(341) in tmRNA + S-adenosyl-L-homocysteine + H(+). Dual-specificity methyltransferase that catalyzes the formation of 5-methyluridine at position 54 (m5U54) in all tRNAs, and that of position 341 (m5U341) in tmRNA (transfer-mRNA). This chain is tRNA/tmRNA (uracil-C(5))-methyltransferase, found in Haemophilus influenzae (strain 86-028NP).